The primary structure comprises 758 residues: 3-isopropylmalate dehydratase (758 aa).

3 residues coordinate [4Fe-4S] cluster: Cys-359, Cys-420, and Cys-423. 2 positions are modified to phosphoserine: Ser-486 and Ser-488.

Belongs to the aconitase/IPM isomerase family. The cofactor is [4Fe-4S] cluster.

The catalysed reaction is (2R,3S)-3-isopropylmalate = (2S)-2-isopropylmalate. It participates in amino-acid biosynthesis; L-leucine biosynthesis; L-leucine from 3-methyl-2-oxobutanoate: step 2/4. In terms of biological role, catalyzes the isomerization between 2-isopropylmalate and 3-isopropylmalate, via the formation of 2-isopropylmaleate. This chain is 3-isopropylmalate dehydratase (leu2), found in Schizosaccharomyces pombe (strain 972 / ATCC 24843) (Fission yeast).